A 555-amino-acid polypeptide reads, in one-letter code: Spermine oxidase (555 aa).

FAD-binding positions include alanine 35, glutamate 55, arginine 63, 79 to 80 (TW), and valine 261. Residues 271–306 (ARPRGPEIEPRGEGDHNHDTGEGGQGGEEPRGGRWD) are disordered. Over residues 274–291 (RGPEIEPRGEGDHNHDTG) the composition is skewed to basic and acidic residues. Residues glutamate 519 and 528 to 529 (TT) contribute to the FAD site.

This sequence belongs to the flavin monoamine oxidase family. FAD serves as cofactor. Widely expressed. Expressed in human tumor cell lines. Isoform 4 is only found in an embryonal kidney cell line.

Its subcellular location is the cytoplasm. It is found in the nucleus. The enzyme catalyses spermine + O2 + H2O = 3-aminopropanal + spermidine + H2O2. Its pathway is amine and polyamine degradation; spermine degradation. Its activity is regulated as follows. Inhibited at more than 90% by SL-11144, SL-11150 and SL-11158, at concentrations less than 1 uM. Functionally, flavoenzyme which catalyzes the oxidation of spermine to spermidine. Can also use N(1)-acetylspermine and spermidine as substrates, with different affinity depending on the isoform (isozyme) and on the experimental conditions. Plays an important role in the regulation of polyamine intracellular concentration and has the potential to act as a determinant of cellular sensitivity to the antitumor polyamine analogs. May contribute to beta-alanine production via aldehyde dehydrogenase conversion of 3-amino-propanal. This Homo sapiens (Human) protein is Spermine oxidase (SMOX).